The sequence spans 105 residues: Heat shock protein HspQ (105 aa).

The protein belongs to the HspQ family.

It is found in the cytoplasm. In terms of biological role, involved in the degradation of certain denaturated proteins, including DnaA, during heat shock stress. The chain is Heat shock protein HspQ from Baumannia cicadellinicola subsp. Homalodisca coagulata.